Reading from the N-terminus, the 356-residue chain is UDP-N-acetylglucosamine--N-acetylmuramyl-(pentapeptide) pyrophosphoryl-undecaprenol N-acetylglucosamine transferase (356 aa).

Residues 12 to 14, Asn-124, Arg-163, Ser-188, Ile-242, and Gln-287 contribute to the UDP-N-acetyl-alpha-D-glucosamine site; that span reads TGG.

Belongs to the glycosyltransferase 28 family. MurG subfamily.

The protein resides in the cell inner membrane. The catalysed reaction is di-trans,octa-cis-undecaprenyl diphospho-N-acetyl-alpha-D-muramoyl-L-alanyl-D-glutamyl-meso-2,6-diaminopimeloyl-D-alanyl-D-alanine + UDP-N-acetyl-alpha-D-glucosamine = di-trans,octa-cis-undecaprenyl diphospho-[N-acetyl-alpha-D-glucosaminyl-(1-&gt;4)]-N-acetyl-alpha-D-muramoyl-L-alanyl-D-glutamyl-meso-2,6-diaminopimeloyl-D-alanyl-D-alanine + UDP + H(+). Its pathway is cell wall biogenesis; peptidoglycan biosynthesis. Cell wall formation. Catalyzes the transfer of a GlcNAc subunit on undecaprenyl-pyrophosphoryl-MurNAc-pentapeptide (lipid intermediate I) to form undecaprenyl-pyrophosphoryl-MurNAc-(pentapeptide)GlcNAc (lipid intermediate II). The protein is UDP-N-acetylglucosamine--N-acetylmuramyl-(pentapeptide) pyrophosphoryl-undecaprenol N-acetylglucosamine transferase of Pseudomonas fluorescens (strain Pf0-1).